The sequence spans 824 residues: Leucine--tRNA ligase (824 aa).

Positions 42-52 (PYPSGRIHMGH) match the 'HIGH' region motif. The 'KMSKS' region signature appears at 581-585 (KMSKS). Lysine 584 contributes to the ATP binding site.

The protein belongs to the class-I aminoacyl-tRNA synthetase family.

The protein localises to the cytoplasm. It carries out the reaction tRNA(Leu) + L-leucine + ATP = L-leucyl-tRNA(Leu) + AMP + diphosphate. The sequence is that of Leucine--tRNA ligase from Geotalea daltonii (strain DSM 22248 / JCM 15807 / FRC-32) (Geobacter daltonii).